A 395-amino-acid polypeptide reads, in one-letter code: Elongation factor Tu (395 aa).

In terms of domain architecture, tr-type G spans 10–205 (KPHCNIGTIG…AVDSYIPQPE (196 aa)). The G1 stretch occupies residues 19–26 (GHVDHGKT). GTP is bound at residue 19-26 (GHVDHGKT). Thr-26 is a binding site for Mg(2+). The interval 60-64 (GITIA) is G2. The tract at residues 81–84 (DCPG) is G3. GTP-binding positions include 81-85 (DCPGH) and 136-139 (NKMD). The tract at residues 136–139 (NKMD) is G4. The segment at 173 to 175 (SAL) is G5.

Belongs to the TRAFAC class translation factor GTPase superfamily. Classic translation factor GTPase family. EF-Tu/EF-1A subfamily. As to quaternary structure, monomer.

The protein resides in the cytoplasm. The catalysed reaction is GTP + H2O = GDP + phosphate + H(+). Functionally, GTP hydrolase that promotes the GTP-dependent binding of aminoacyl-tRNA to the A-site of ribosomes during protein biosynthesis. The sequence is that of Elongation factor Tu from Acidiphilium cryptum (strain JF-5).